The following is a 586-amino-acid chain: Kelch-like protein 7 (586 aa).

A BTB domain is found at C44–S111. Positions C146 to Q248 constitute a BACK domain. 6 Kelch repeats span residues R294–N336, V337–G382, K383–G430, L431–D481, I483–S528, and V530–D575.

In terms of assembly, homodimer. Component of the BCR(KLHL7) E3 ubiquitin ligase complex, at least composed of CUL3 and KLHL7 and RBX1. As to expression, widely expressed, with highest levels in adult and fetal heart, CNS and adult testis.

Its subcellular location is the nucleus. The protein resides in the cytoplasm. Its pathway is protein modification; protein ubiquitination. Substrate-specific adapter of a BCR (BTB-CUL3-RBX1) E3 ubiquitin ligase complex. The BCR(KLHL7) complex acts by mediating ubiquitination and subsequent degradation of substrate proteins. Probably mediates 'Lys-48'-linked ubiquitination. This Homo sapiens (Human) protein is Kelch-like protein 7 (KLHL7).